Consider the following 452-residue polypeptide: Cobyrinate a,c-diamide synthase (452 aa).

One can recognise a GATase cobBQ-type domain in the interval 248 to 441 (RVAYALDAAF…LHIHFYQNPA (194 aa)). Cysteine 330 serves as the catalytic Nucleophile.

It belongs to the CobB/CbiA family. Requires Mg(2+) as cofactor.

It catalyses the reaction cob(II)yrinate + 2 L-glutamine + 2 ATP + 2 H2O = cob(II)yrinate a,c diamide + 2 L-glutamate + 2 ADP + 2 phosphate + 2 H(+). It functions in the pathway cofactor biosynthesis; adenosylcobalamin biosynthesis; cob(II)yrinate a,c-diamide from sirohydrochlorin (anaerobic route): step 10/10. Catalyzes the ATP-dependent amidation of the two carboxylate groups at positions a and c of cobyrinate, using either L-glutamine or ammonia as the nitrogen source. The chain is Cobyrinate a,c-diamide synthase from Listeria innocua serovar 6a (strain ATCC BAA-680 / CLIP 11262).